The primary structure comprises 430 residues: Serine/threonine transporter SstT (430 aa).

9 helical membrane-spanning segments follow: residues 24–44, 47–67, 82–102, 144–164, 186–206, 223–243, 294–314, 320–340, and 361–381; these read IIVG…VTWI, FGTL…FVLV, FGTV…VAVL, AIID…GLAM, VIRW…FTNV, LLVG…IFIF, IPLG…IMAM, LGIQ…ALGA, and FGIS…IGVI.

It belongs to the dicarboxylate/amino acid:cation symporter (DAACS) (TC 2.A.23) family.

It localises to the cell membrane. It carries out the reaction L-serine(in) + Na(+)(in) = L-serine(out) + Na(+)(out). The enzyme catalyses L-threonine(in) + Na(+)(in) = L-threonine(out) + Na(+)(out). Involved in the import of serine and threonine into the cell, with the concomitant import of sodium (symport system). This is Serine/threonine transporter SstT from Bifidobacterium adolescentis (strain ATCC 15703 / DSM 20083 / NCTC 11814 / E194a).